A 637-amino-acid polypeptide reads, in one-letter code: Phosphomethylpyrimidine synthase (637 aa).

Substrate is bound by residues asparagine 242, methionine 271, tyrosine 300, histidine 336, 356–358, 397–400, and glutamate 436; these read SRG and DGLR. Histidine 440 serves as a coordination point for Zn(2+). Position 463 (tyrosine 463) interacts with substrate. Histidine 504 is a binding site for Zn(2+). [4Fe-4S] cluster is bound by residues cysteine 584, cysteine 587, and cysteine 592.

Belongs to the ThiC family. As to quaternary structure, homodimer. It depends on [4Fe-4S] cluster as a cofactor.

It catalyses the reaction 5-amino-1-(5-phospho-beta-D-ribosyl)imidazole + S-adenosyl-L-methionine = 4-amino-2-methyl-5-(phosphooxymethyl)pyrimidine + CO + 5'-deoxyadenosine + formate + L-methionine + 3 H(+). Its pathway is cofactor biosynthesis; thiamine diphosphate biosynthesis. Its function is as follows. Catalyzes the synthesis of the hydroxymethylpyrimidine phosphate (HMP-P) moiety of thiamine from aminoimidazole ribotide (AIR) in a radical S-adenosyl-L-methionine (SAM)-dependent reaction. The chain is Phosphomethylpyrimidine synthase from Bordetella pertussis (strain Tohama I / ATCC BAA-589 / NCTC 13251).